The chain runs to 308 residues: CMP-N-acetylneuraminate:beta-galactoside alpha-2,3-sialyltransferase (308 aa).

Catalysis depends on Asp-201, which acts as the Proton acceptor. CMP-N-acetyl-beta-neuraminate is bound by residues 221–225, 242–243, and 262–263; these read LPHPR, FE, and SS. Catalysis depends on His-223, which acts as the Proton donor.

It belongs to the glycosyltransferase 52 family. Divalent metal cations are not required for the alpha-2,3-sialyltransferase activity. is required as a cofactor.

Functionally, catalyzes the transfer of sialic acid from the substrate CMP-N-acetylneuraminate to lactosyl lipids as preferred acceptor substrates in vitro, forming alpha-2,3-linked sialosides. Beta-1,4-linked galactosyl lipids are better substrates than beta-1,3-linked galactosyl lipids. The natural acceptor substrate may be cell surface oligosaccharides in lipooligosaccharide (LOS), whose sialylation has been demonstrated vital for the virulence of P.multocida. In Pasteurella multocida (strain Pm70), this protein is CMP-N-acetylneuraminate:beta-galactoside alpha-2,3-sialyltransferase (lst).